The sequence spans 264 residues: MALVVKGKVNINEFIDLSKSEKLLPSMFTPVKSVMVSKVDKIMVHENESLSEVNLLKGVKLIEGGYVCLVGLVVSGEWNLPDNCRGGVSVCMVDKRMERADEATLGSYYTAAAKKRFQFKVVPNYGITTKDAEKNIWQVLVNIKNVKMSAGYCPLSLEFVSVCIVYKNNIKLGLREKVTSVNDGGPMELSEEVVDEFMENVPMSVRLAKFRTKSSKRGPKNNNNLGKGRSGGRPKPKSFDEVEKEFDNLIEDEAETSVADSDSY.

The disordered stretch occupies residues 211-264 (RTKSSKRGPKNNNNLGKGRSGGRPKPKSFDEVEKEFDNLIEDEAETSVADSDSY). The span at 237–247 (KSFDEVEKEFD) shows a compositional bias: basic and acidic residues.

Belongs to the tobamovirus movement protein family. Binds to host RBCS at the plasmodesmata; this interaction seems required for viral systemic movement. In resistant plants, interacts with host MBP2C at host microtubules; this interaction prevents virus cell to cell movement. In resistant plants, interacts with host resistance (R) protein (e.g. tomato ToMV resistance protein TM-2(2), AC Q71BG9) at the host plasma membrane; this interaction triggers host defense responses leading to programmed cell death.

The protein localises to the host cytoplasm. The protein resides in the host cytoskeleton. It is found in the host cell junction. Its subcellular location is the host plasmodesma. Its function is as follows. Transports viral genome to neighboring plant cells directly through plasmosdesmata, without any budding. The movement protein allows efficient cell to cell propagation, by bypassing the host cell wall barrier. Forms a ribonucleoprotein complex with viral RNA. Binds microtubules and modulates microtubule stability. Can bind double-stranded DNA. Triggers host hypersensitive defense reaction in incompatible plants harboring resistance (R) proteins. The protein is Movement protein (MP) of Antirrhinum majus (Garden snapdragon).